The chain runs to 155 residues: Interleukin-2 (155 aa).

A signal peptide spans 1–20 (MYKIQLLSCIALTLALVANG). T23 carries an O-linked (GalNAc...) threonine glycan. The cysteines at positions 79 and 127 are disulfide-linked.

This sequence belongs to the IL-2 family.

It is found in the secreted. Cytokine produced by activated CD4-positive helper T-cells and to a lesser extend activated CD8-positive T-cells and natural killer (NK) cells that plays pivotal roles in the immune response and tolerance. Binds to a receptor complex composed of either the high-affinity trimeric IL-2R (IL2RA/CD25, IL2RB/CD122 and IL2RG/CD132) or the low-affinity dimeric IL-2R (IL2RB and IL2RG). Interaction with the receptor leads to oligomerization and conformation changes in the IL-2R subunits resulting in downstream signaling starting with phosphorylation of JAK1 and JAK3. In turn, JAK1 and JAK3 phosphorylate the receptor to form a docking site leading to the phosphorylation of several substrates including STAT5. This process leads to activation of several pathways including STAT, phosphoinositide-3-kinase/PI3K and mitogen-activated protein kinase/MAPK pathways. Functions as a T-cell growth factor and can increase NK-cell cytolytic activity as well. Promotes strong proliferation of activated B-cells and subsequently immunoglobulin production. Plays a pivotal role in regulating the adaptive immune system by controlling the survival and proliferation of regulatory T-cells, which are required for the maintenance of immune tolerance. Moreover, participates in the differentiation and homeostasis of effector T-cell subsets, including Th1, Th2, Th17 as well as memory CD8-positive T-cells. This Boselaphus tragocamelus (Nilgai) protein is Interleukin-2 (IL2).